A 191-amino-acid chain; its full sequence is MKKSLLGLTFASLMFSAGSAVAADYKIDKEGQHAFVNFRIQHLGYSWLYGTFKDFDGTFTFDEKNPAADKVNVTINTTSVDTNHAERDKHLRSADFLNTAKYPQATFTSTSVKKDGDELDITGDLTLNGVTKPVTLEAKLIGQGDDPWGGKRAGFEAEGKIKLKDFNIKTDLGPASQEVDLIISVEGVQQK.

Positions 1-22 (MKKSLLGLTFASLMFSAGSAVA) are cleaved as a signal peptide.

Belongs to the UPF0312 family. Type 1 subfamily.

The protein localises to the periplasm. In Shigella boydii serotype 4 (strain Sb227), this protein is Protein YceI.